Reading from the N-terminus, the 462-residue chain is N-myc proto-oncogene protein (462 aa).

The interval 19–47 (LEFDSLQPCFYPDEDDFYFGGPDSTPPGE) is interaction with AURKA. The interval 61–90 (LSPSRAFPEHSPEPSNWATEMLLPEADLWG) is interaction with AURKA and FBXW7. The 9aaTAD signature appears at 76 to 85 (NWATEMLLPE). Disordered stretches follow at residues 133 to 177 (EKLQ…ATLP), 232 to 290 (AAPA…SNNK), and 332 to 390 (APSP…LERQ). The segment covering 138 to 174 (GHGPPGASSSCPAPGVGASSSGGRALGGSASAGRTGA) has biased composition (low complexity). A compositionally biased stretch (acidic residues) spans 257–276 (TLSDSDDEDDEEEDEEEEID). A phosphoserine; by CK2 mark is found at S259 and S261. Residues 379-431 (ERRRNHNILERQRRNDLRSSFLTLRDHVPELVKNEKAAKVVILKKATEYVHAL) enclose the bHLH domain. The interval 431 to 452 (LQANEHQLLLEKEKLQARQQQL) is leucine-zipper.

In terms of assembly, efficient DNA binding requires dimerization with another bHLH protein. Binds DNA as a heterodimer with MAX. Interacts with KDM5A, KDM5B and HUWE1. Interacts with MYCNOS. Interacts with AURKA; interaction is phospho-independent and triggers AURKA activation; AURKA competes with FBXW7 for binding to unphosphorylated MYCN but not for binding to unphosphorylated MYCN. Interacts with FBXW7; FBXW7 competes with AURKA for binding to unphosphorylated MYCN but not for binding to phosphorylated MYCN. Post-translationally, phosphorylated by GSK3-beta which may promote its degradation. Phosphorylated by AURKA.

It localises to the nucleus. Its function is as follows. Positively regulates the transcription of MYCNOS in neuroblastoma cells. The sequence is that of N-myc proto-oncogene protein (Mycn) from Rattus norvegicus (Rat).